A 134-amino-acid chain; its full sequence is Small ribosomal subunit protein uS8 (134 aa).

Belongs to the universal ribosomal protein uS8 family. In terms of assembly, part of the 30S ribosomal subunit. Contacts proteins S5 and S12.

One of the primary rRNA binding proteins, it binds directly to 16S rRNA central domain where it helps coordinate assembly of the platform of the 30S subunit. The chain is Small ribosomal subunit protein uS8 from Petrotoga mobilis (strain DSM 10674 / SJ95).